Here is a 447-residue protein sequence, read N- to C-terminus: ATP-dependent protease ATPase subunit HslU (447 aa).

ATP contacts are provided by residues I18, 60–65 (GVGKTE), D259, E325, and R397.

This sequence belongs to the ClpX chaperone family. HslU subfamily. In terms of assembly, a double ring-shaped homohexamer of HslV is capped on each side by a ring-shaped HslU homohexamer. The assembly of the HslU/HslV complex is dependent on binding of ATP.

It is found in the cytoplasm. In terms of biological role, ATPase subunit of a proteasome-like degradation complex; this subunit has chaperone activity. The binding of ATP and its subsequent hydrolysis by HslU are essential for unfolding of protein substrates subsequently hydrolyzed by HslV. HslU recognizes the N-terminal part of its protein substrates and unfolds these before they are guided to HslV for hydrolysis. The polypeptide is ATP-dependent protease ATPase subunit HslU (Burkholderia thailandensis (strain ATCC 700388 / DSM 13276 / CCUG 48851 / CIP 106301 / E264)).